A 243-amino-acid chain; its full sequence is Ice-binding protein K1-A (243 aa).

Positions 1–20 (MFSSTYLLAIIALAVSSVFA) are cleaved as a signal peptide.

This sequence belongs to the ice-binding protein family.

The protein resides in the secreted. Its function is as follows. Binds to the surface of ice crystals. Inhibits growth of the ice crystals. Has antifreeze activity for survival under snow cover. Has high thermal hysteresis (TH) activity, which is the ability to lower the freezing point of an aqueous solution below its melting point, and thus the freezing of the cell fluid can be prevented protecting the organism from ice damage. The TH activity of this protein is 2.0 degrees Celsius at 0.11 mM. This is Ice-binding protein K1-A from Typhula ishikariensis (Gray snow mold fungus).